We begin with the raw amino-acid sequence, 176 residues long: Transcription termination/antitermination protein NusG (176 aa).

The KOW domain maps to 125–149; it reads GEVVRVVEGPFANFTATVEEYDVEH.

Belongs to the NusG family.

Participates in transcription elongation, termination and antitermination. This chain is Transcription termination/antitermination protein NusG, found in Helicobacter pylori (strain ATCC 700392 / 26695) (Campylobacter pylori).